A 172-amino-acid chain; its full sequence is Small ribosomal subunit protein uS5 (172 aa).

The S5 DRBM domain maps to 17-80; it reads LREKMISVNR…DEARRKMVKV (64 aa).

It belongs to the universal ribosomal protein uS5 family. Part of the 30S ribosomal subunit. Contacts proteins S4 and S8.

In terms of biological role, with S4 and S12 plays an important role in translational accuracy. Located at the back of the 30S subunit body where it stabilizes the conformation of the head with respect to the body. In Cupriavidus pinatubonensis (strain JMP 134 / LMG 1197) (Cupriavidus necator (strain JMP 134)), this protein is Small ribosomal subunit protein uS5.